We begin with the raw amino-acid sequence, 140 residues long: Large ribosomal subunit protein uL11 (140 aa).

The protein belongs to the universal ribosomal protein uL11 family. In terms of assembly, part of the ribosomal stalk of the 50S ribosomal subunit. Interacts with L10 and the large rRNA to form the base of the stalk. L10 forms an elongated spine to which L12 dimers bind in a sequential fashion forming a multimeric L10(L12)X complex. Post-translationally, one or more lysine residues are methylated.

Functionally, forms part of the ribosomal stalk which helps the ribosome interact with GTP-bound translation factors. This is Large ribosomal subunit protein uL11 from Campylobacter hominis (strain ATCC BAA-381 / DSM 21671 / CCUG 45161 / LMG 19568 / NCTC 13146 / CH001A).